The sequence spans 236 residues: DNA repair protein RecO (236 aa).

Belongs to the RecO family.

In terms of biological role, involved in DNA repair and RecF pathway recombination. In Haemophilus influenzae (strain PittGG), this protein is DNA repair protein RecO.